The chain runs to 28 residues: Somatostatin-2 (28 aa).

Cysteine 17 and cysteine 28 are disulfide-bonded.

It belongs to the somatostatin family.

The protein localises to the secreted. Its function is as follows. Somatostatin inhibits the release of somatotropin. In Oreochromis niloticus (Nile tilapia), this protein is Somatostatin-2 (sst2).